The sequence spans 856 residues: Glucans biosynthesis glucosyltransferase H (856 aa).

6 helical membrane-spanning segments follow: residues 144–164 (ILLV…KGIM), 198–218 (ILIM…TALM), 517–537 (VFLT…FLVL), 574–594 (LFST…ILIW), 608–628 (TLSM…RMIF), and 691–711 (IVGS…VGLG).

Belongs to the glycosyltransferase 2 family. OpgH subfamily.

The protein localises to the cell inner membrane. Its pathway is glycan metabolism; osmoregulated periplasmic glucan (OPG) biosynthesis. In terms of biological role, involved in the biosynthesis of osmoregulated periplasmic glucans (OPGs). The chain is Glucans biosynthesis glucosyltransferase H from Pseudomonas fluorescens (strain Pf0-1).